The chain runs to 94 residues: Putative septation protein SpoVG (94 aa).

Belongs to the SpoVG family.

In terms of biological role, could be involved in septation. In Acholeplasma laidlawii (strain PG-8A), this protein is Putative septation protein SpoVG.